Consider the following 536-residue polypeptide: Lysosomal acid glucosylceramidase (536 aa).

Residues 1–39 (MEFSSPSREECPKPLSRVSIMAGSLTGLLLLQAVSWASG) form the signal peptide. Intrachain disulfides connect Cys-43–Cys-55 and Cys-57–Cys-62. N-linked (GlcNAc...) asparagine glycans are attached at residues Asn-58, Asn-98, and Asn-185. Catalysis depends on Glu-274, which acts as the Proton donor. A glycan (N-linked (GlcNAc...) asparagine) is linked at Asn-309. Glu-379 serves as the catalytic Nucleophile. An N-linked (GlcNAc...) asparagine glycan is attached at Asn-501.

It belongs to the glycosyl hydrolase 30 family. Interacts with saposin-C. Interacts with SCARB2. Interacts with TCP1. May interacts with SNCA; this interaction may inhibit the glucosylceramidase activity. Interacts with GRN; this interaction prevents aggregation of GBA1-SCARB2 complex via interaction with HSPA1A upon stress.

The protein localises to the lysosome membrane. It carries out the reaction a beta-D-glucosyl-(1&lt;-&gt;1')-N-acylsphing-4-enine + H2O = an N-acylsphing-4-enine + D-glucose. It catalyses the reaction a beta-D-galactosyl-(1&lt;-&gt;1')-N-acylsphing-4-enine + H2O = an N-acylsphing-4-enine + D-galactose. The enzyme catalyses cholesteryl 3-beta-D-glucoside + H2O = cholesterol + D-glucose. The catalysed reaction is a beta-D-glucosyl-(1&lt;-&gt;1')-N-acylsphing-4-enine + cholesterol = cholesteryl 3-beta-D-glucoside + an N-acylsphing-4-enine. It carries out the reaction beta-D-glucosyl-N-(9Z-octadecenoyl)-sphing-4E-enine + cholesterol = N-(9Z-octadecenoyl)-sphing-4-enine + cholesteryl 3-beta-D-glucoside. It catalyses the reaction beta-D-glucosyl-(1&lt;-&gt;1')-N-hexadecanoylsphing-4-enine + cholesterol = cholesteryl 3-beta-D-glucoside + N-hexadecanoylsphing-4-enine. The enzyme catalyses beta-D-glucosyl-N-octanoylsphing-4E-enine + cholesterol = N-octanoylsphing-4-enine + cholesteryl 3-beta-D-glucoside. The catalysed reaction is beta-D-glucosyl-N-dodecanoylsphing-4-enine + cholesterol = N-dodecanoylsphing-4-enine + cholesteryl 3-beta-D-glucoside. It carries out the reaction beta-D-glucosyl-(1&lt;-&gt;1)-N-octadecanoylsphing-4-enine + cholesterol = N-octadecanoylsphing-4-enine + cholesteryl 3-beta-D-glucoside. It catalyses the reaction beta-D-glucosyl-(1&lt;-&gt;1')-N-(15Z-tetracosenoyl)-sphing-4-enine + cholesterol = N-(15Z-tetracosenoyl)-sphing-4-enine + cholesteryl 3-beta-D-glucoside. The enzyme catalyses a beta-D-galactosyl-(1&lt;-&gt;1')-N-acylsphing-4-enine + cholesterol = cholesteryl 3-beta-D-galactoside + an N-acylsphing-4-enine. The catalysed reaction is 1-(beta-D-galactosyl)-N-dodecanoylsphing-4-enine + cholesterol = cholesteryl 3-beta-D-galactoside + N-dodecanoylsphing-4-enine. It carries out the reaction a beta-D-xylosyl-(1&lt;-&gt;1')-N-acylsphing-4-enine + cholesterol = cholesteryl 3-beta-D-xyloside + an N-acylsphing-4-enine. It catalyses the reaction beta-D-xylosyl-(1&lt;-&gt;1')-N-(9Z-octadecenoyl)-sphing-4-enine + cholesterol = cholesteryl 3-beta-D-xyloside + N-(9Z-octadecenoyl)-sphing-4-enine. It participates in steroid metabolism; cholesterol metabolism. It functions in the pathway sphingolipid metabolism. Synergistically activated by saposin-A and saposin-C, two saposin peptides produced by proteolytic processing of prosaposin/PSAP. Saposin-C activates GBA1 through its recruitment to membranes. The membrane structure and composition in anionic phospholipids are also important for the activation. Activated by PKC in the salvage pathway of ceramide formation. Inhibited by conduritol B epoxide/CBE. Glucosylceramidase that catalyzes, within the lysosomal compartment, the hydrolysis of glucosylceramides/GlcCers (such as beta-D-glucosyl-(1&lt;-&gt;1')-N-acylsphing-4-enine) into free ceramides (such as N-acylsphing-4-enine) and glucose. Plays a central role in the degradation of complex lipids and the turnover of cellular membranes. Through the production of ceramides, participates in the PKC-activated salvage pathway of ceramide formation. Catalyzes the glucosylation of cholesterol, through a transglucosylation reaction where glucose is transferred from GlcCer to cholesterol. GlcCer containing mono-unsaturated fatty acids (such as beta-D-glucosyl-N-(9Z-octadecenoyl)-sphing-4-enine) are preferred as glucose donors for cholesterol glucosylation when compared with GlcCer containing same chain length of saturated fatty acids (such as beta-D-glucosyl-N-octadecanoyl-sphing-4-enine). Under specific conditions, may alternatively catalyze the reverse reaction, transferring glucose from cholesteryl 3-beta-D-glucoside to ceramide. Can also hydrolyze cholesteryl 3-beta-D-glucoside producing glucose and cholesterol. Catalyzes the hydrolysis of galactosylceramides/GalCers (such as beta-D-galactosyl-(1&lt;-&gt;1')-N-acylsphing-4-enine), as well as the transfer of galactose between GalCers and cholesterol in vitro, but with lower activity than with GlcCers. Contrary to GlcCer and GalCer, xylosylceramide/XylCer (such as beta-D-xyosyl-(1&lt;-&gt;1')-N-acylsphing-4-enine) is not a good substrate for hydrolysis, however it is a good xylose donor for transxylosylation activity to form cholesteryl 3-beta-D-xyloside. The chain is Lysosomal acid glucosylceramidase from Homo sapiens (Human).